We begin with the raw amino-acid sequence, 334 residues long: 4-hydroxyproline 2-epimerase (334 aa).

The active-site Proton acceptor is C90. Residues 91–92 (GH), H223, and D249 each bind substrate. C253 (proton donor) is an active-site residue. 254 to 255 (GT) contacts substrate.

This sequence belongs to the proline racemase family. In terms of assembly, homodimer.

It carries out the reaction trans-4-hydroxy-L-proline = cis-4-hydroxy-D-proline. Catalyzes the epimerization of trans-4-hydroxy-L-proline (t4LHyp) to cis-4-hydroxy-D-proline (c4DHyp). Is likely involved in a degradation pathway that converts t4LHyp to alpha-ketoglutarate, which would allow P.denitrificans to grow on t4LHyp as a sole carbon source. Also seems to be involved in an alternative catabolic pathway that degrades trans-4-hydroxy-L-proline betaine (tHyp-B) to alpha-ketoglutarate; this pathway would permit the utilization of tHyp-B as a sole carbon and nitrogen source. The protein is 4-hydroxyproline 2-epimerase (hypF) of Paracoccus denitrificans (strain Pd 1222).